The sequence spans 276 residues: MRFRARITSKRFIELFIQVSSTVAKLAKVCVLRVCPDRLYFCPMGLLGEAQLWGEMRRDVFHHFCMEGASQEFNEICLELMSEHLARAVKNAGNASSLKLQLTNKQRPCLTLVVELASCPGHTRAVVHDLPVRVLPRRRWKDCTEPHVRGSDVSVYLPALKTLKNMVERMANVGSHVLVEANLNGRMNLTVETDRVTIKSYFKNLGNPPNAVLCMSQGRDPETMVQVRVDNRKLLQCFDGHQINPTMALCNILSNTLLHLVLVHEDISLQYFIPAS.

This sequence belongs to the HUS1 family. In terms of assembly, interacts with RAD1 and RAD9B.

This Mus musculus (Mouse) protein is Checkpoint protein HUS1B (Hus1b).